The primary structure comprises 146 residues: Large ribosomal subunit protein uL15 (146 aa).

The segment at 1–51 (MQLNTIKPAEGSKKNRRHVGRGIGSGLGKTAGRGHKGQKSRSGGFHKVGFE) is disordered. The segment covering 21 to 31 (RGIGSGLGKTA) has biased composition (gly residues).

It belongs to the universal ribosomal protein uL15 family. In terms of assembly, part of the 50S ribosomal subunit.

Its function is as follows. Binds to the 23S rRNA. This Polynucleobacter necessarius subsp. necessarius (strain STIR1) protein is Large ribosomal subunit protein uL15.